The chain runs to 203 residues: Nucleoside triphosphate pyrophosphatase (203 aa).

The Proton acceptor role is filled by Asp-77.

It belongs to the Maf family. It depends on a divalent metal cation as a cofactor.

Its subcellular location is the cytoplasm. It carries out the reaction a ribonucleoside 5'-triphosphate + H2O = a ribonucleoside 5'-phosphate + diphosphate + H(+). The enzyme catalyses a 2'-deoxyribonucleoside 5'-triphosphate + H2O = a 2'-deoxyribonucleoside 5'-phosphate + diphosphate + H(+). Nucleoside triphosphate pyrophosphatase. May have a dual role in cell division arrest and in preventing the incorporation of modified nucleotides into cellular nucleic acids. This Rickettsia felis (strain ATCC VR-1525 / URRWXCal2) (Rickettsia azadi) protein is Nucleoside triphosphate pyrophosphatase.